A 135-amino-acid polypeptide reads, in one-letter code: Small ribosomal subunit protein bS6 (135 aa).

Residues 96–135 (HAEGPSIQMQKRDERERGDRGDRSDRGDRGDRGDRGGFRR) form a disordered region. Positions 105–135 (QKRDERERGDRGDRSDRGDRGDRGDRGGFRR) are enriched in basic and acidic residues.

The protein belongs to the bacterial ribosomal protein bS6 family.

In terms of biological role, binds together with bS18 to 16S ribosomal RNA. The sequence is that of Small ribosomal subunit protein bS6 from Cereibacter sphaeroides (strain ATCC 17029 / ATH 2.4.9) (Rhodobacter sphaeroides).